Reading from the N-terminus, the 166-residue chain is Crossover junction endodeoxyribonuclease RuvC (166 aa).

Residues Asp7, Glu67, and Asp139 contribute to the active site. The Mg(2+) site is built by Asp7, Glu67, and Asp139.

This sequence belongs to the RuvC family. In terms of assembly, homodimer which binds Holliday junction (HJ) DNA. The HJ becomes 2-fold symmetrical on binding to RuvC with unstacked arms; it has a different conformation from HJ DNA in complex with RuvA. In the full resolvosome a probable DNA-RuvA(4)-RuvB(12)-RuvC(2) complex forms which resolves the HJ. Requires Mg(2+) as cofactor.

It localises to the cytoplasm. It catalyses the reaction Endonucleolytic cleavage at a junction such as a reciprocal single-stranded crossover between two homologous DNA duplexes (Holliday junction).. Its function is as follows. The RuvA-RuvB-RuvC complex processes Holliday junction (HJ) DNA during genetic recombination and DNA repair. Endonuclease that resolves HJ intermediates. Cleaves cruciform DNA by making single-stranded nicks across the HJ at symmetrical positions within the homologous arms, yielding a 5'-phosphate and a 3'-hydroxyl group; requires a central core of homology in the junction. The consensus cleavage sequence is 5'-(A/T)TT(C/G)-3'. Cleavage occurs on the 3'-side of the TT dinucleotide at the point of strand exchange. HJ branch migration catalyzed by RuvA-RuvB allows RuvC to scan DNA until it finds its consensus sequence, where it cleaves and resolves the cruciform DNA. The protein is Crossover junction endodeoxyribonuclease RuvC of Paramagnetospirillum magneticum (strain ATCC 700264 / AMB-1) (Magnetospirillum magneticum).